A 443-amino-acid polypeptide reads, in one-letter code: Xaa-Pro dipeptidase (443 aa).

D246, D257, H339, E384, and E423 together coordinate Mn(2+).

It belongs to the peptidase M24B family. Bacterial-type prolidase subfamily. It depends on Mn(2+) as a cofactor.

It catalyses the reaction Xaa-L-Pro dipeptide + H2O = an L-alpha-amino acid + L-proline. Its function is as follows. Splits dipeptides with a prolyl residue in the C-terminal position. This Shigella flexneri protein is Xaa-Pro dipeptidase.